We begin with the raw amino-acid sequence, 91 residues long: PqqA binding protein 1 (91 aa).

Belongs to the PqqD family. Monomer. Interacts with PqqE.

It participates in cofactor biosynthesis; pyrroloquinoline quinone biosynthesis. Functionally, functions as a PqqA binding protein and presents PqqA to PqqE, in the pyrroloquinoline quinone (PQQ) biosynthetic pathway. The sequence is that of PqqA binding protein 1 (pqqD1) from Pseudomonas putida (strain ATCC 47054 / DSM 6125 / CFBP 8728 / NCIMB 11950 / KT2440).